Reading from the N-terminus, the 128-residue chain is MKVAIIACQKMVEMGCPGKEACVSCFKAINEKSGAFERYKDVELVAFTTCGGCPGRRFPMRVKLLKTAAGAEAIHIANCTFLQPECPYINFDEICKKLMEELEIPIVFGTHTLVKKGEVVCTCGDNKE.

The protein to M.jannaschii MJ0766.

This is an uncharacterized protein from Methanocaldococcus jannaschii (strain ATCC 43067 / DSM 2661 / JAL-1 / JCM 10045 / NBRC 100440) (Methanococcus jannaschii).